We begin with the raw amino-acid sequence, 108 residues long: CDGSH iron-sulfur domain-containing protein 1 (108 aa).

Residues 13–31 (WIAAVTFAAGTAALGYLAY) form a helical; Signal-anchor for type III membrane protein membrane-spanning segment. Topologically, residues 32–108 (KKFYAKESRT…GPLIIKKKET (77 aa)) are cytoplasmic. Lys42 participates in a covalent cross-link: Glycyl lysine isopeptide (Lys-Gly) (interchain with G-Cter in ubiquitin). The Schiff-base intermediate with pyridoxal 5'-phosphate role is filled by Lys55. Residues Lys55 and Lys68 each carry the N6-acetyllysine; alternate modification. Residues Lys55 and Lys68 each participate in a glycyl lysine isopeptide (Lys-Gly) (interchain with G-Cter in ubiquitin); alternate cross-link. 2 residues coordinate [2Fe-2S] cluster: Cys72 and Cys74. Glycyl lysine isopeptide (Lys-Gly) (interchain with G-Cter in ubiquitin) cross-links involve residues Lys78 and Lys79. Residues Cys83 and His87 each contribute to the [2Fe-2S] cluster site. Lys89 is covalently cross-linked (Glycyl lysine isopeptide (Lys-Gly) (interchain with G-Cter in ubiquitin)). Lys104 is modified (N6-acetyllysine; alternate). Lys104 is covalently cross-linked (Glycyl lysine isopeptide (Lys-Gly) (interchain with G-Cter in ubiquitin); alternate). Residues Lys105 and Lys106 each participate in a glycyl lysine isopeptide (Lys-Gly) (interchain with G-Cter in ubiquitin) cross-link.

Belongs to the CISD protein family. Homodimer. [2Fe-2S] cluster is required as a cofactor. The cofactor is pyridoxal 5'-phosphate. In terms of processing, ubiquitinated by PRKN during mitophagy, leading to its degradation and enhancement of mitophagy. Deubiquitinated by USP30.

It is found in the mitochondrion outer membrane. The enzyme catalyses L-cysteine + 2-oxoglutarate = 2-oxo-3-sulfanylpropanoate + L-glutamate. In terms of biological role, L-cysteine transaminase that catalyzes the reversible transfer of the amino group from L-cysteine to the alpha-keto acid 2-oxoglutarate to respectively form 2-oxo-3-sulfanylpropanoate and L-glutamate. The catalytic cycle occurs in the presence of pyridoxal 5'-phosphate (PLP) cofactor that facilitates transamination by initially forming an internal aldimine with the epsilon-amino group of active site Lys-55 residue on the enzyme (PLP-enzyme aldimine), subsequently displaced by formation of an external aldimine with the substrate amino group (PLP-L-cysteine aldimine). The external aldimine is further deprotonated to form a carbanion intermediate, which in the presence of 2-oxoglutarate regenerates PLP yielding final products 2-oxo-3-sulfanylpropanoate and L-glutamate. The proton transfer in carbanion intermediate is suggested to be controlled by the active site lysine residue, whereas PLP stabilizes carbanion structure through electron delocalization, also known as the electron sink effect. Plays a key role in regulating maximal capacity for electron transport and oxidative phosphorylation. May be involved in iron-sulfur cluster shuttling and/or in redox reactions. Can transfer the [2Fe-2S] cluster to an apo-acceptor protein only when in the oxidation state, likely serving as a redox sensor that regulates mitochondrial iron-sulfur cluster assembly and iron trafficking upon oxidative stress. The polypeptide is CDGSH iron-sulfur domain-containing protein 1 (Cisd1) (Rattus norvegicus (Rat)).